Reading from the N-terminus, the 320-residue chain is Transaldolase (320 aa).

Catalysis depends on lysine 126, which acts as the Schiff-base intermediate with substrate.

This sequence belongs to the transaldolase family. Type 1 subfamily. As to quaternary structure, homodimer.

Its subcellular location is the cytoplasm. The catalysed reaction is D-sedoheptulose 7-phosphate + D-glyceraldehyde 3-phosphate = D-erythrose 4-phosphate + beta-D-fructose 6-phosphate. It functions in the pathway carbohydrate degradation; pentose phosphate pathway; D-glyceraldehyde 3-phosphate and beta-D-fructose 6-phosphate from D-ribose 5-phosphate and D-xylulose 5-phosphate (non-oxidative stage): step 2/3. In terms of biological role, transaldolase is important for the balance of metabolites in the pentose-phosphate pathway. This is Transaldolase from Bordetella pertussis (strain Tohama I / ATCC BAA-589 / NCTC 13251).